A 143-amino-acid chain; its full sequence is MALLGTYNHTLDDKGRLTIPSKMREQFKDDKVFISLGFDGCVDVRNEAEWLKWTEKVASTGQATAEGRALTRKIMSMSDETTFDNAGRIKISSILQNKANITKDVVIIGNNDHLELWDLKVWEVYIEQAPGIEEAAKNFEEKI.

SpoVT-AbrB domains lie at 6-49 and 78-121; these read TYNH…NEAE and SDET…DLKV.

This sequence belongs to the MraZ family. Forms oligomers.

It localises to the cytoplasm. It is found in the nucleoid. In Spiroplasma kunkelii, this protein is Transcriptional regulator MraZ.